We begin with the raw amino-acid sequence, 317 residues long: Melanocyte-stimulating hormone receptor (317 aa).

Positions 1–26 (MPVQGSPRSLLGAVNSTPTATPHLRP) are disordered. The Extracellular portion of the chain corresponds to 1-37 (MPVQGSPRSLLGAVNSTPTATPHLRPAANQTGPQCLE). N-linked (GlcNAc...) asparagine glycosylation is present at Asn-29. Residues 38-63 (VSIPDGLFLCLGLVSLVENTLVVAAI) form a helical membrane-spanning segment. Residues 64 to 72 (AKNRNLHSP) are Cytoplasmic-facing. Residues 73–93 (MYCFVCCLALSDLLVSVSSVL) traverse the membrane as a helical segment. Residues 94–118 (ETAVLLLLGAGALAAQATVVQLLGN) are Extracellular-facing. A helical transmembrane segment spans residues 119-140 (VIDVLLCSSMVSSLFFLGAIAM). The Cytoplasmic segment spans residues 141–163 (DRYISIFYALRYHSIVTLARARR). A helical membrane pass occupies residues 164–183 (AIAAIWAASMLSSTLFIAYC). The Extracellular portion of the chain corresponds to 184-191 (DHTAALLC). Residues 192-211 (LVVFFLAMLVLMAVLYVHML) traverse the membrane as a helical segment. The Cytoplasmic portion of the chain corresponds to 212–240 (TQACQHAQGIARLHKRQRPVQQGWGLKGA). Residues 241 to 266 (ATLAILLGVFFLCWGPFFLHLTLIAV) traverse the membrane as a helical segment. The Extracellular segment spans residues 267-279 (CPQHPTCSCIFKN). A helical transmembrane segment spans residues 280 to 300 (FRLFLALIVCNAIVDPLIYAF). Residues 301–317 (RSQELCKTLKELLLFSW) are Cytoplasmic-facing.

It belongs to the G-protein coupled receptor 1 family. Interacts with MGRN1, but does not undergo MGRN1-mediated ubiquitination; this interaction competes with GNAS-binding and thus inhibits agonist-induced cAMP production. Interacts with OPN3; the interaction results in a decrease in MC1R-mediated cAMP signaling and ultimately a decrease in melanin production in melanocytes.

It is found in the cell membrane. Functionally, receptor for MSH (alpha, beta and gamma) and ACTH. The activity of this receptor is mediated by G proteins which activate adenylate cyclase. Mediates melanogenesis, the production of eumelanin (black/brown) and phaeomelanin (red/yellow), via regulation of cAMP signaling in melanocytes. This is Melanocyte-stimulating hormone receptor (MC1R) from Hapalemur griseus (Gray gentle lemur).